The primary structure comprises 151 residues: Putative pre-16S rRNA nuclease (151 aa).

This sequence belongs to the YqgF nuclease family.

Its subcellular location is the cytoplasm. Functionally, could be a nuclease involved in processing of the 5'-end of pre-16S rRNA. The protein is Putative pre-16S rRNA nuclease of Gloeothece citriformis (strain PCC 7424) (Cyanothece sp. (strain PCC 7424)).